A 186-amino-acid polypeptide reads, in one-letter code: Transcription factor FapR (186 aa).

This sequence belongs to the FapR family.

Transcriptional factor involved in regulation of membrane lipid biosynthesis by repressing genes involved in fatty acid and phospholipid metabolism. The polypeptide is Transcription factor FapR (Halalkalibacterium halodurans (strain ATCC BAA-125 / DSM 18197 / FERM 7344 / JCM 9153 / C-125) (Bacillus halodurans)).